Reading from the N-terminus, the 193-residue chain is 7-methyl-GTP pyrophosphatase (193 aa).

The active-site Proton acceptor is the Asp69.

This sequence belongs to the Maf family. YceF subfamily. The cofactor is a divalent metal cation.

It is found in the cytoplasm. It carries out the reaction N(7)-methyl-GTP + H2O = N(7)-methyl-GMP + diphosphate + H(+). Nucleoside triphosphate pyrophosphatase that hydrolyzes 7-methyl-GTP (m(7)GTP). May have a dual role in cell division arrest and in preventing the incorporation of modified nucleotides into cellular nucleic acids. The protein is 7-methyl-GTP pyrophosphatase of Chromohalobacter salexigens (strain ATCC BAA-138 / DSM 3043 / CIP 106854 / NCIMB 13768 / 1H11).